A 436-amino-acid chain; its full sequence is MSQALPLVTRQGDRIAIVSGLRTPFARQATAFHGIPAVDLGKMVVGEMLARSEISPDVIEQLVFGQVVQMPEAPNVAREIVLGTGMSVHTDAYSVSRACATSFQAVANVAESLMTGTIRAGIAGGADSSSVLPIGVSKKLARVLVDVNKARTMGLRLKLFSQLRLRDLAPVPPAVAEYSTGLRMGDTAEQMAKTYGITREQQDALAHRSHQRAALAWSEGKLGDEVMTVYIPPFREPLSEDNNIRGTSTLADYAKLRPAFDRKHGTVTAANSTPLTDGAAAVILMTESRAKELGLVPLGYLRSYAFTAIDVWQDMLLGPAWSTPLALERAGLTLSDLTLIDMHEAFAAQTLANLQLLGSERFARDVLGRAHATGEVDESKFNVLGGSIAYGHPFAATGARMITQTLHELRRRGGGFGLVTACAAGGLGAAMVLEAE.

The active-site Acyl-thioester intermediate is cysteine 99. Active-site proton acceptor residues include histidine 392 and cysteine 422.

This sequence belongs to the thiolase-like superfamily. Thiolase family. As to quaternary structure, heterotetramer of two alpha chains (FadJ) and two beta chains (FadI).

Its subcellular location is the cytoplasm. It carries out the reaction an acyl-CoA + acetyl-CoA = a 3-oxoacyl-CoA + CoA. It participates in lipid metabolism; fatty acid beta-oxidation. In terms of biological role, catalyzes the final step of fatty acid oxidation in which acetyl-CoA is released and the CoA ester of a fatty acid two carbons shorter is formed. The sequence is that of 3-ketoacyl-CoA thiolase from Enterobacter sp. (strain 638).